Reading from the N-terminus, the 340-residue chain is Cytoskeleton protein RodZ (340 aa).

The Cytoplasmic segment spans residues 1–111 (MNTEATQEKS…LGKQRKKRDG (111 aa)). The HTH cro/C1-type domain occupies 19–79 (LRTAREQMGL…RLVHVPEEEL (61 aa)). Residues 30–49 (QQNVAERLCLKLSTIRDIEE) constitute a DNA-binding region (H-T-H motif). Residues 112–132 (WLMIFTWLVLFVVLGLTGAWW) traverse the membrane as a helical; Signal-anchor for type II membrane protein segment. At 133–340 (WQNHKAAQDD…QVARLTVGAP (208 aa)) the chain is on the periplasmic side. Positions 162-252 (ALSDDNANGG…AAPLPTGSAA (91 aa)) are disordered. Residues 183-201 (ATANNAPSSVTATSDNGTP) are compositionally biased toward polar residues. Residues 202–233 (AATAQSSQVTASNAAPAANAVNDNTPPVAVAP) show a composition bias toward low complexity.

It belongs to the RodZ family.

It is found in the cell inner membrane. In terms of biological role, cytoskeletal protein that is involved in cell-shape control through regulation of the length of the long axis. This is Cytoskeleton protein RodZ from Erwinia tasmaniensis (strain DSM 17950 / CFBP 7177 / CIP 109463 / NCPPB 4357 / Et1/99).